Here is a 702-residue protein sequence, read N- to C-terminus: Ribosomal RNA large subunit methyltransferase K/L (702 aa).

Residues 43 to 154 (LVYQSLMWSR…KETASIALDL (112 aa)) enclose the THUMP domain.

This sequence belongs to the methyltransferase superfamily. RlmKL family.

The protein localises to the cytoplasm. It carries out the reaction guanosine(2445) in 23S rRNA + S-adenosyl-L-methionine = N(2)-methylguanosine(2445) in 23S rRNA + S-adenosyl-L-homocysteine + H(+). The enzyme catalyses guanosine(2069) in 23S rRNA + S-adenosyl-L-methionine = N(2)-methylguanosine(2069) in 23S rRNA + S-adenosyl-L-homocysteine + H(+). Functionally, specifically methylates the guanine in position 2445 (m2G2445) and the guanine in position 2069 (m7G2069) of 23S rRNA. In Escherichia coli O6:K15:H31 (strain 536 / UPEC), this protein is Ribosomal RNA large subunit methyltransferase K/L.